The following is a 95-amino-acid chain: Co-chaperonin GroES (95 aa).

The protein belongs to the GroES chaperonin family. Heptamer of 7 subunits arranged in a ring. Interacts with the chaperonin GroEL.

It is found in the cytoplasm. In terms of biological role, together with the chaperonin GroEL, plays an essential role in assisting protein folding. The GroEL-GroES system forms a nano-cage that allows encapsulation of the non-native substrate proteins and provides a physical environment optimized to promote and accelerate protein folding. GroES binds to the apical surface of the GroEL ring, thereby capping the opening of the GroEL channel. The sequence is that of Co-chaperonin GroES from Ruegeria sp. (strain TM1040) (Silicibacter sp.).